The following is a 304-amino-acid chain: Oxygen-dependent coproporphyrinogen-III oxidase (304 aa).

S95 provides a ligand contact to substrate. The a divalent metal cation site is built by H99 and H109. The active-site Proton donor is H109. Residue 111 to 113 (NVR) coordinates substrate. A divalent metal cation-binding residues include H148 and H178. The segment at 243 to 278 (YVEFNLVYDRGTLFGLQSGGRTESILMSLPPLVRWR) is important for dimerization. Residue 261 to 263 (GGR) coordinates substrate.

It belongs to the aerobic coproporphyrinogen-III oxidase family. As to quaternary structure, homodimer. Requires a divalent metal cation as cofactor.

The protein localises to the cytoplasm. It carries out the reaction coproporphyrinogen III + O2 + 2 H(+) = protoporphyrinogen IX + 2 CO2 + 2 H2O. It functions in the pathway porphyrin-containing compound metabolism; protoporphyrin-IX biosynthesis; protoporphyrinogen-IX from coproporphyrinogen-III (O2 route): step 1/1. Its function is as follows. Involved in the heme biosynthesis. Catalyzes the aerobic oxidative decarboxylation of propionate groups of rings A and B of coproporphyrinogen-III to yield the vinyl groups in protoporphyrinogen-IX. The polypeptide is Oxygen-dependent coproporphyrinogen-III oxidase (Thioalkalivibrio sulfidiphilus (strain HL-EbGR7)).